A 198-amino-acid chain; its full sequence is Probable nicotinate-nucleotide adenylyltransferase (198 aa).

It belongs to the NadD family.

The catalysed reaction is nicotinate beta-D-ribonucleotide + ATP + H(+) = deamido-NAD(+) + diphosphate. The protein operates within cofactor biosynthesis; NAD(+) biosynthesis; deamido-NAD(+) from nicotinate D-ribonucleotide: step 1/1. Catalyzes the reversible adenylation of nicotinate mononucleotide (NaMN) to nicotinic acid adenine dinucleotide (NaAD). The polypeptide is Probable nicotinate-nucleotide adenylyltransferase (Albidiferax ferrireducens (strain ATCC BAA-621 / DSM 15236 / T118) (Rhodoferax ferrireducens)).